The chain runs to 298 residues: Urease accessory protein UreD (298 aa).

It belongs to the UreD family. As to quaternary structure, ureD, UreF and UreG form a complex that acts as a GTP-hydrolysis-dependent molecular chaperone, activating the urease apoprotein by helping to assemble the nickel containing metallocenter of UreC. The UreE protein probably delivers the nickel.

The protein resides in the cytoplasm. In terms of biological role, required for maturation of urease via the functional incorporation of the urease nickel metallocenter. The polypeptide is Urease accessory protein UreD (Marinobacter nauticus (strain ATCC 700491 / DSM 11845 / VT8) (Marinobacter aquaeolei)).